A 302-amino-acid polypeptide reads, in one-letter code: Acetylglutamate kinase (302 aa).

Substrate is bound by residues 67-68 (GG), Arg-89, and Asn-189.

It belongs to the acetylglutamate kinase family. ArgB subfamily.

Its subcellular location is the cytoplasm. It catalyses the reaction N-acetyl-L-glutamate + ATP = N-acetyl-L-glutamyl 5-phosphate + ADP. It participates in amino-acid biosynthesis; L-arginine biosynthesis; N(2)-acetyl-L-ornithine from L-glutamate: step 2/4. Functionally, catalyzes the ATP-dependent phosphorylation of N-acetyl-L-glutamate. The sequence is that of Acetylglutamate kinase from Streptomyces clavuligerus.